The chain runs to 452 residues: MGRDIPDNETWWYNPYMDIHPHWKQFDQVPAAVYYSLGIFIAICGIIGCVGNGVVIYLFTKTKSLQTPANMFIINLAFSDFTFSLVNGFPLMTISCFMKYWVFGNAACKVYGLIGGIFGLMSIMTMTMISIDRYNVIGRPMSASKKMSHRKAFIMIIFVWIWSTIWAIGPIFGWGAYTLEGVLCNCSFDYITRDTTTRSNILCMYIFAFMCPIVVIFFCYFNIVMSVSNHEKEMAAMAKRLNAKELRKAQAGANAEMKLAKISIVIVTQFLLSWSPYAVVALLAQFGPIEWVTPYAAQLPVMFAKASAIHNPMIYSVSHPKFRERIASNFPWILTCCQYDEKEIEDDKDAEAEIPAGEQSGGETADAAQMKEMMAMMQKMQAQQQQQPAYPPQGYPPQGYPPPPPQGYPPQGYPPQGYPPQGYPPPPQGPPPQGPPPQAAPPQGVDNQAYQA.

The Extracellular segment spans residues 1–33 (MGRDIPDNETWWYNPYMDIHPHWKQFDQVPAAV). The N-linked (GlcNAc...) asparagine glycan is linked to asparagine 8. The chain crosses the membrane as a helical span at residues 34–58 (YYSLGIFIAICGIIGCVGNGVVIYL). Topologically, residues 59-70 (FTKTKSLQTPAN) are cytoplasmic. A helical membrane pass occupies residues 71–97 (MFIINLAFSDFTFSLVNGFPLMTISCF). Residues 98–109 (MKYWVFGNAACK) lie on the Extracellular side of the membrane. A disulfide bridge connects residues cysteine 108 and cysteine 186. A helical transmembrane segment spans residues 110–131 (VYGLIGGIFGLMSIMTMTMISI). A 'Ionic lock' involved in activated form stabilization motif is present at residues 132-134 (DRY). At 132 to 151 (DRYNVIGRPMSASKKMSHRK) the chain is on the cytoplasmic side. A helical membrane pass occupies residues 152–172 (AFIMIIFVWIWSTIWAIGPIF). Residues 173–199 (GWGAYTLEGVLCNCSFDYITRDTTTRS) are Extracellular-facing. A helical transmembrane segment spans residues 200 to 224 (NILCMYIFAFMCPIVVIFFCYFNIV). Residues 225–261 (MSVSNHEKEMAAMAKRLNAKELRKAQAGANAEMKLAK) lie on the Cytoplasmic side of the membrane. Residues 262–283 (ISIVIVTQFLLSWSPYAVVALL) traverse the membrane as a helical segment. At 284–293 (AQFGPIEWVT) the chain is on the extracellular side. Residues 294–315 (PYAAQLPVMFAKASAIHNPMIY) traverse the membrane as a helical segment. Position 305 is an N6-(retinylidene)lysine (lysine 305). Residues 316-452 (SVSHPKFRER…QGVDNQAYQA (137 aa)) lie on the Cytoplasmic side of the membrane. Residues cysteine 336 and cysteine 337 are each lipidated (S-palmitoyl cysteine). 2 disordered regions span residues 346–365 (DDKD…GETA) and 376–452 (MMQK…AYQA). The segment covering 376 to 388 (MMQKMQAQQQQQP) has biased composition (low complexity). Over residues 389-440 (AYPPQGYPPQGYPPPPPQGYPPQGYPPQGYPPQGYPPPPQGPPPQGPPPQAA) the composition is skewed to pro residues.

Belongs to the G-protein coupled receptor 1 family. Opsin subfamily. In terms of processing, contains one covalently linked retinal chromophore. Upon light absorption, the covalently bound 11-cis-retinal is converted to all-trans-retinal. After hydrolysis of the Schiff base and release of the covalently bound all-trans-retinal, active rhodopsin is regenerated by binding of a fresh molecule of 11-cis-retinal.

It localises to the cell projection. It is found in the rhabdomere membrane. Its function is as follows. Photoreceptor required for image-forming vision at low light intensity. Light-induced isomerization of 11-cis to all-trans retinal triggers a conformational change that activates signaling via G-proteins. Signaling mediates the activation of phospholipase C. Subsequent receptor phosphorylation mediates displacement of the bound G-protein alpha subunit by arrestin and terminates signaling. This is Rhodopsin (RHO) from Loligo forbesii (Veined squid).